A 648-amino-acid chain; its full sequence is Acetyl-coenzyme A synthetase (648 aa).

CoA-binding positions include 190–193 (RGGR) and Thr310. ATP is bound by residues 386-388 (GEP), 410-415 (DTWWQT), Asp499, and Arg514. Position 522 (Ser522) interacts with CoA. Arg525 is an ATP binding site. Mg(2+) is bound by residues Val536, His538, and Val541. CoA is bound at residue Arg583. Lys608 bears the N6-acetyllysine mark.

The protein belongs to the ATP-dependent AMP-binding enzyme family. Mg(2+) is required as a cofactor. Acetylated. Deacetylation by the SIR2-homolog deacetylase activates the enzyme.

The enzyme catalyses acetate + ATP + CoA = acetyl-CoA + AMP + diphosphate. Its function is as follows. Catalyzes the conversion of acetate into acetyl-CoA (AcCoA), an essential intermediate at the junction of anabolic and catabolic pathways. AcsA undergoes a two-step reaction. In the first half reaction, AcsA combines acetate with ATP to form acetyl-adenylate (AcAMP) intermediate. In the second half reaction, it can then transfer the acetyl group from AcAMP to the sulfhydryl group of CoA, forming the product AcCoA. The sequence is that of Acetyl-coenzyme A synthetase from Methylobacterium radiotolerans (strain ATCC 27329 / DSM 1819 / JCM 2831 / NBRC 15690 / NCIMB 10815 / 0-1).